Consider the following 308-residue polypeptide: MSAQKPGLHPRNRHHSRYDLATLCQVNPELRQFLTLTPAGEQSVDFANPLAVKALNKALLAHFYAVANWDIPDGFLCPPVPGRADYIHHLADLLAEASGTIPANASILDIGVGANCIYPLIGVHEYGWRFTGSETSSQALSSAQAIISANPGLNRAIRLRRQKESGAIFNGIIHKNEQYDATLCNPPFHDSAAAARAGSERKRRNLGLNKDDALNFGGQQQELWCEGGEVAFIKKMIEESKGFAKQVMWFTSLVSRGENLPPLYRALTDVGAVKVVKKEMAQGQKQSRFIAWTFMNDEQRRRFVNRQR.

It belongs to the methyltransferase superfamily. METTL16/RlmF family.

The protein localises to the cytoplasm. The catalysed reaction is adenosine(1618) in 23S rRNA + S-adenosyl-L-methionine = N(6)-methyladenosine(1618) in 23S rRNA + S-adenosyl-L-homocysteine + H(+). Its function is as follows. Specifically methylates the adenine in position 1618 of 23S rRNA. The chain is Ribosomal RNA large subunit methyltransferase F from Shigella boydii serotype 18 (strain CDC 3083-94 / BS512).